Here is a 413-residue protein sequence, read N- to C-terminus: 2,3-bisphosphoglycerate-independent phosphoglycerate mutase (413 aa).

It belongs to the BPG-independent phosphoglycerate mutase family. A-PGAM subfamily.

The catalysed reaction is (2R)-2-phosphoglycerate = (2R)-3-phosphoglycerate. The protein operates within carbohydrate degradation; glycolysis; pyruvate from D-glyceraldehyde 3-phosphate: step 3/5. Functionally, catalyzes the interconversion of 2-phosphoglycerate and 3-phosphoglycerate. In Sulfolobus acidocaldarius (strain ATCC 33909 / DSM 639 / JCM 8929 / NBRC 15157 / NCIMB 11770), this protein is 2,3-bisphosphoglycerate-independent phosphoglycerate mutase.